Here is a 374-residue protein sequence, read N- to C-terminus: MARSGYTLPVFACAAAIAALQRLRQPAASIQSVDCHLIDPDQTVAIAIEQVAPLSPDRALAICRSDPGDNLDLTRGTPIWAEVQLSPRSPDQDSLAIEAGEGIGHSETGPAIYDYAQRLLRANLLPLLQTNEQLTVRLILPEGRRLAERTANAAFGVVEGLSLLGTHGVAEALSAPEQLQVFRDRLRQLSADPDLVIFCIGENGLDLSQKIGLPRDRQLKTANWLGPLLVEAGLLGIPRILLFGYHGKLLKLAGSIFHTHHHVADARREILAAYAIAAGASLEQVRSLLDFPTVDAATQYLDQTDPALASRLWPQIAEAIVDRSQAYIRRYSEQIPEIGVVLFGRDRQLLTASSQAQTWLTNRAIAQPLRYPSA.

Belongs to the CbiD family.

The catalysed reaction is Co-precorrin-5B + S-adenosyl-L-methionine = Co-precorrin-6A + S-adenosyl-L-homocysteine. It participates in cofactor biosynthesis; adenosylcobalamin biosynthesis; cob(II)yrinate a,c-diamide from sirohydrochlorin (anaerobic route): step 6/10. Its function is as follows. Catalyzes the methylation of C-1 in cobalt-precorrin-5B to form cobalt-precorrin-6A. The sequence is that of Cobalt-precorrin-5B C(1)-methyltransferase from Synechococcus elongatus (strain ATCC 33912 / PCC 7942 / FACHB-805) (Anacystis nidulans R2).